The chain runs to 2039 residues: Methylcytosine dioxygenase TET1 (2039 aa).

Residues 1 to 19 (MSRSRPAKPSKSVKTKLQK) are compositionally biased toward basic residues. Disordered stretches follow at residues 1-79 (MSRS…AGAA), 119-168 (VVTP…NGEQ), and 227-286 (DNEC…GFPD). Composition is skewed to basic and acidic residues over residues 53-65 (KRRDGKKETEDKT) and 138-149 (IQDEPGVKHSEN). Composition is skewed to polar residues over residues 150 to 168 (DSVPSQHATVSPGTENGEQ) and 241 to 265 (QRSTSEVTSQKNTSNQLADLSSQVE). Positions 512 to 657 (LDLTQGSQAA…NGPKSESMDC (146 aa)) are sufficient for binding to genomic CpG islands. The CXXC-type zinc finger occupies 567–608 (ERRKRKACGVCEPCQQKANCGECTYCKNRKNSHQICKKRKCE). 8 residues coordinate Zn(2+): Cys574, Cys577, Cys580, Cys586, Cys589, Cys592, Cys602, and Cys607. 8 disordered regions span residues 613–670 (KPEA…QRLD), 711–735 (CDANLTGVENPQPSEDDKQQTNPSP), 820–859 (GAEPTIFNNHPNTHSAGSRPHPPEKVPNKEPKDGSPVQPS), 882–906 (QLSEAPSESSSPSKPEKDEEAHQKT), 964–993 (QGYPSSPTAEKKGAAGGRAPFDGFENSHPL), 1050–1129 (VRNA…KKQE), 1209–1240 (VEPSDSLPTCQFKTESGGQTFAEPADNSQGQP), and 1322–1341 (KREAQTSSNGPLGPTTDSAQ). Residues 653–670 (ESMDCSRRGHGEEEQRLD) are compositionally biased toward basic and acidic residues. Positions 825–835 (IFNNHPNTHSA) are enriched in polar residues. Basic and acidic residues predominate over residues 840-852 (HPPEKVPNKEPKD). At Ser854 the chain carries Phosphoserine. Residues 884 to 894 (SEAPSESSSPS) show a composition bias toward low complexity. The span at 895–904 (KPEKDEEAHQ) shows a compositional bias: basic and acidic residues. A compositionally biased stretch (polar residues) spans 1053–1064 (AESTPESLVAKN). Basic residues predominate over residues 1094-1116 (KPKKAQKKARATPHANKRKKKPP). Composition is skewed to polar residues over residues 1214-1227 (SLPTCQFKTESGGQ) and 1326-1341 (QTSSNGPLGPTTDSAQ). Residues Cys1371, Cys1373, Cys1430, His1456, and Cys1458 each contribute to the Zn(2+) site. Arg1499 contributes to the 2-oxoglutarate binding site. Zn(2+)-binding residues include Cys1509, Cys1511, Cys1527, and Cys1536. The interaction with DNA stretch occupies residues 1528 to 1541 (SWSMYFNGCKFGRS). Lys1537 participates in a covalent cross-link: Glycyl lysine isopeptide (Lys-Gly) (interchain with G-Cter in ubiquitin). Cys1628 is a binding site for Zn(2+). Cys1644 serves as a coordination point for 2-oxoglutarate. A Zn(2+)-binding site is contributed by His1650. Fe cation is bound by residues His1652 and Asp1654. A substrate-binding site is contributed by Asn1657. His1685 is a 2-oxoglutarate binding site. The segment covering 1734-1743 (GKRAKMKQNH) has biased composition (basic residues). 2 disordered regions span residues 1734–1760 (GKRAKMKQNHNKSGSHNTKSFSSASST) and 1830–1901 (AAHP…LPQL). Positions 1748 to 1760 (SHNTKSFSSASST) are enriched in low complexity. Over residues 1850–1875 (TSPSEQLTSNQSNQQLPLLSNSQKLA) the composition is skewed to polar residues. Positions 1880 to 1895 (EDERHPEADEPQHPED) are enriched in basic and acidic residues. His1939 contacts Fe cation. Position 1954 to 1956 (1954 to 1956 (RVS)) interacts with 2-oxoglutarate. 1960-1962 (YQH) is a substrate binding site. Residue His1970 participates in Zn(2+) binding.

The protein belongs to the TET family. Interacts with SIN3A; recruits the transcriptional co-repressor SIN3A to gene promoters. Interacts with HCFC1. Interacts (via C-terminus) with OGT. Found in a complex composed of at least SINHCAF, SIN3A, HDAC1, SAP30, RBBP4, OGT and TET1. Interacts with QSER1. Interacts with NONO (via DNA-binding domain); this interaction recruits TET1 to genomic loci. Interacts with FOXA2; this interaction may recruit TET1 to specific enhancers to preserve their unmethylated status and hence allowing gene expression. Interacts with RNF2. Directly interacts (via C-terminus) with the DCAF1 component of the CRL4(VprBP) E3 ubiquitin-protein ligase complex. As to quaternary structure, interacts with UHRF1; this interaction induces the recruitment of TET1 to replicating heterochromatin. Interacts with DCAF1. Fe(2+) serves as cofactor. Requires Zn(2+) as cofactor. Post-translationally, glycosylated. Interaction with OGT leads to GlcNAcylation. In terms of processing, monoubiquitinated by the DCX (DDB1-CUL4-X-box) E3 ubiquitin-protein ligase complex called CRL4(VprBP) or CUL4A-RBX1-DDB1-DCAF1/VPRBP complex. Monoubiquitinated by the DCX (DDB1-CUL4-X-box) E3 ubiquitin-protein ligase complex called CRL4(VprBP) or CUL4A-RBX1-DDB1-DCAF1/VPRBP complex; this modification promotes binding to DNA. Expressed in germinal vesicle (GV) stage and MII-stage oocytes and in early embryos. Also detected somatic tissues, including brain, liver and kidney, but at very low levels. As to expression, predominantly expressed in early embryos. Also expressed in embryonic stem cells and in primordial germ cells. Expressed in adult tissues, including brain cortex, cerebellum, heart, kidney, liver, muscle and spleen, although at much lower levels than isoform 2. In the brain, expressed at higher levels in glial cells than in neurons. Expressed in placenta. Expressed in the pituitary, most probably in thyrotropes. In terms of tissue distribution, preferentially expressed in differentiated cells, including in cerebral cortex, cerebellum and thymus. Also expressed in heart, kidney, liver, muscle and spleen at much higher levels than isoform 1. In the brain, expressed at higher levels in neurons than in glial cells. Expressed in the olfactory bulb and in the mammary gland.

It is found in the nucleus. It localises to the chromosome. The catalysed reaction is a 5-methyl-2'-deoxycytidine in DNA + 2-oxoglutarate + O2 = a 5-hydroxymethyl-2'-deoxycytidine in DNA + succinate + CO2. It catalyses the reaction a 5-hydroxymethyl-2'-deoxycytidine in DNA + 2-oxoglutarate + O2 = a 5-formyl-2'-deoxycytidine in DNA + succinate + CO2 + H2O. It carries out the reaction a 5-formyl-2'-deoxycytidine in DNA + 2-oxoglutarate + O2 = a 5-carboxyl-2'-deoxycytidine in DNA + succinate + CO2 + H(+). In terms of biological role, dioxygenase that plays a key role in active DNA demethylation, by catalyzing the sequential oxidation of the modified genomic base 5-methylcytosine (5mC) into 5-hydroxymethylcytosine (5hmC), 5-formylcytosine (5fC), and 5-carboxylcytosine (5caC). In addition to its role in DNA demethylation, plays a more general role in chromatin regulation by recruiting histone modifying protein complexes to alter histone marks and chromatin accessibility, leading to both activation and repression of gene expression. Plays therefore a role in many biological processes, including stem cell maintenance, T- and B-cell development, inflammation regulation, iron homeostasis, neural activity or DNA repair. Involved in the balance between pluripotency and lineage commitment of cells it plays a role in embryonic stem cells maintenance and inner cell mass cell specification. Together with QSER1, plays an essential role in the protection and maintenance of transcriptional and developmental programs to inhibit the binding of DNMT3A/3B and therefore de novo methylation. May play a role in the pancreatic beta-cell specification during development. In this context, may function as an upstream epigenetic regulator of PAX4 presumably through direct recruitment by FOXA2 to a PAX4 enhancer to preserve its unmethylated status, thereby potentiating PAX4 expression to adopt beta-cell fate during endocrine lineage commitment. Under DNA hypomethylation conditions, such as in female meiotic germ cells, may induce epigenetic reprogramming of pericentromeric heterochromatin (PCH), the constitutive heterochromatin of pericentromeric regions. PCH forms chromocenters in the interphase nucleus and chromocenters cluster at the prophase of meiosis. In this context, may also be essential for chromocenter clustering in a catalytic activity-independent manner, possibly through the recruitment polycomb repressive complex 1 (PRC1) to the chromocenters. During embryonic development, may be required for normal meiotic progression in oocytes and meiotic gene activation. Binds preferentially to DNA containing cytidine-phosphate-guanosine (CpG) dinucleotides over CpH (H=A, T, and C), hemimethylated-CpG and hemimethylated-hydroxymethyl-CpG. Functionally, dioxygenase that plays a key role in active DNA demethylation. Binds to promoters, particularly to those with high CG content. In hippocampal neurons, isoform 1 regulates the expression of a unique subset of genes compared to isoform 2, although some overlap between both isoforms, hence differentially regulates excitatory synaptic transmission. In hippocampal neuron cell cultures, isoform 1 controls both miniature excitatory postsynaptic current amplitude and frequency. Isoform 1 may regulate genes involved in hippocampal-dependent memory, leading to positive regulation of memory, contrary to isoform 2 that may decrease memory. Its function is as follows. Dioxygenase that plays a key role in active DNA demethylation. As isoform 1, binds to promoters, particularly to those with high CG content, however displays reduced global chromatin affinity compared with isoform 1, leading to decreased global DNA demethylation compared with isoform 1. Contrary to isoform 1, isoform 2 localizes during S phase to sites of ongoing DNA replication in heterochromatin, causing a significant de novo 5hmC formation, globally, and more so in heterochromatin, including LINE 1 interspersed DNA repeats leading to their activation. In hippocampal neurons, isoform 2 regulates the expression of a unique subset of genes compared with isoform 1, although some overlap between both isoforms, hence differentially regulating excitatory synaptic transmission. In hippocampal neuron cell cultures, isoform 2 controls miniature excitatory postsynaptic current frequency, but not amplitude. Isoform 2 may regulate genes involved in hippocampal-dependent memory, leading to negative regulation of memory, contrary to isoform 1 that may improve memory. In immature and partially differentiated gonadotrope cells, represses luteinizing hormone gene LHB expression directly and does not catalyze 5hmC at the gene promoter. The sequence is that of Methylcytosine dioxygenase TET1 (Tet1) from Mus musculus (Mouse).